A 169-amino-acid chain; its full sequence is S-ribosylhomocysteine lyase (169 aa).

The Fe cation site is built by H54, H58, and C128.

Belongs to the LuxS family. As to quaternary structure, homodimer. Fe cation serves as cofactor.

The enzyme catalyses S-(5-deoxy-D-ribos-5-yl)-L-homocysteine = (S)-4,5-dihydroxypentane-2,3-dione + L-homocysteine. In terms of biological role, involved in the synthesis of autoinducer 2 (AI-2) which is secreted by bacteria and is used to communicate both the cell density and the metabolic potential of the environment. The regulation of gene expression in response to changes in cell density is called quorum sensing. Catalyzes the transformation of S-ribosylhomocysteine (RHC) to homocysteine (HC) and 4,5-dihydroxy-2,3-pentadione (DPD). The polypeptide is S-ribosylhomocysteine lyase (Shewanella amazonensis (strain ATCC BAA-1098 / SB2B)).